Reading from the N-terminus, the 483-residue chain is UDP-N-acetylmuramate--L-alanine ligase (483 aa).

128-134 serves as a coordination point for ATP; that stretch reads GTHGKTT.

This sequence belongs to the MurCDEF family.

The protein localises to the cytoplasm. The enzyme catalyses UDP-N-acetyl-alpha-D-muramate + L-alanine + ATP = UDP-N-acetyl-alpha-D-muramoyl-L-alanine + ADP + phosphate + H(+). It functions in the pathway cell wall biogenesis; peptidoglycan biosynthesis. In terms of biological role, cell wall formation. This is UDP-N-acetylmuramate--L-alanine ligase from Shewanella violacea (strain JCM 10179 / CIP 106290 / LMG 19151 / DSS12).